A 197-amino-acid polypeptide reads, in one-letter code: Recombination protein RecR (197 aa).

A C4-type zinc finger spans residues cysteine 55 to cysteine 70. One can recognise a Toprim domain in the interval glutamine 78–proline 173.

The protein belongs to the RecR family.

Functionally, may play a role in DNA repair. It seems to be involved in an RecBC-independent recombinational process of DNA repair. It may act with RecF and RecO. This chain is Recombination protein RecR, found in Xanthomonas campestris pv. campestris (strain 8004).